We begin with the raw amino-acid sequence, 213 residues long: Translation initiation factor IF-3 (213 aa).

The tract at residues 193–213 (EKIASLPPLPPDNSGEPEDDE) is disordered.

The protein belongs to the IF-3 family. Monomer.

It localises to the cytoplasm. Functionally, IF-3 binds to the 30S ribosomal subunit and shifts the equilibrium between 70S ribosomes and their 50S and 30S subunits in favor of the free subunits, thus enhancing the availability of 30S subunits on which protein synthesis initiation begins. The polypeptide is Translation initiation factor IF-3 (Chlorobaculum tepidum (strain ATCC 49652 / DSM 12025 / NBRC 103806 / TLS) (Chlorobium tepidum)).